We begin with the raw amino-acid sequence, 85 residues long: Beta-insect depressant toxin Lqh-dprIT3g (85 aa).

Positions 1-21 (MKLLLLLTISASMLIEGLVNA) are cleaved as a signal peptide. Positions 22-82 (DGYIRGGDGC…EWDYETDTCG (61 aa)) constitute an LCN-type CS-alpha/beta domain. 4 disulfide bridges follow: Cys31/Cys81, Cys35/Cys56, Cys42/Cys63, and Cys46/Cys65. Gly82 carries the post-translational modification Glycine amide.

The protein belongs to the long (4 C-C) scorpion toxin superfamily. Sodium channel inhibitor family. Beta subfamily. As to expression, expressed by the venom gland.

The protein resides in the secreted. Its function is as follows. Depressant insect beta-toxins cause a transient contraction paralysis followed by a slow flaccid paralysis. They bind voltage-independently at site-4 of sodium channels (Nav) and block action potentials, primarily by depolarizing the axonal membrane and suppressing the sodium current. This depressant toxin is active only on insects. It is found in a relatively small amount in the venom. In Leiurus hebraeus (Hebrew deathstalker scorpion), this protein is Beta-insect depressant toxin Lqh-dprIT3g.